Reading from the N-terminus, the 301-residue chain is Acetylglutamate kinase (301 aa).

Substrate-binding positions include 76-77 (GG), arginine 98, and asparagine 192.

It belongs to the acetylglutamate kinase family. ArgB subfamily.

The protein resides in the cytoplasm. It catalyses the reaction N-acetyl-L-glutamate + ATP = N-acetyl-L-glutamyl 5-phosphate + ADP. It functions in the pathway amino-acid biosynthesis; L-arginine biosynthesis; N(2)-acetyl-L-ornithine from L-glutamate: step 2/4. Functionally, catalyzes the ATP-dependent phosphorylation of N-acetyl-L-glutamate. The polypeptide is Acetylglutamate kinase (Chlorobaculum parvum (strain DSM 263 / NCIMB 8327) (Chlorobium vibrioforme subsp. thiosulfatophilum)).